Consider the following 189-residue polypeptide: GMP synthase [glutamine-hydrolyzing] subunit A (189 aa).

A Glutamine amidotransferase type-1 domain is found at 5 to 189; that stretch reads KILVVNNYGQ…TNFLEICEKY (185 aa). Residue Cys-79 is the Nucleophile of the active site. Catalysis depends on residues His-166 and Glu-168.

As to quaternary structure, heterodimer composed of a glutamine amidotransferase subunit (A) and a GMP-binding subunit (B).

The enzyme catalyses XMP + L-glutamine + ATP + H2O = GMP + L-glutamate + AMP + diphosphate + 2 H(+). It functions in the pathway purine metabolism; GMP biosynthesis; GMP from XMP (L-Gln route): step 1/1. Catalyzes the synthesis of GMP from XMP. The polypeptide is GMP synthase [glutamine-hydrolyzing] subunit A (Methanosarcina barkeri (strain Fusaro / DSM 804)).